The following is a 302-amino-acid chain: Nucleotide-binding protein RHOS4_02640 (302 aa).

Residue 15–22 participates in ATP binding; it reads GPSGAGRT. 62-65 contributes to the GTP binding site; sequence DVRN.

Belongs to the RapZ-like family.

Displays ATPase and GTPase activities. This chain is Nucleotide-binding protein RHOS4_02640, found in Cereibacter sphaeroides (strain ATCC 17023 / DSM 158 / JCM 6121 / CCUG 31486 / LMG 2827 / NBRC 12203 / NCIMB 8253 / ATH 2.4.1.) (Rhodobacter sphaeroides).